The primary structure comprises 205 residues: Spermatogenesis-associated protein 24 (205 aa).

Positions 17 to 167 (LAFDQLRDVI…QKQNFRNHIS (151 aa)) form a coiled coil. Positions 138 to 185 (EDILNGKENEIKELQQVISQQKQNFRNHISDFRIQKQQETYMAQVLDQ) are required for interaction with CBX5 and TBPL1. The tract at residues 185–205 (QKRKKATGMRRARSRQCSREK) is disordered. Positions 186-205 (KRKKATGMRRARSRQCSREK) are enriched in basic residues.

This sequence belongs to the SPATA24 family. Homodimer. Interacts with CBX3, CBX5, GMNN, GTF2B, TBPL1 and the polycomb proteins PHCF2, RNF2 and SCMH1 but not with CBX1 or PCGF2. In terms of tissue distribution, testis-specific (at protein level).

Its subcellular location is the cytoplasm. It localises to the nucleus. The protein localises to the nucleolus. The protein resides in the nucleoplasm. Functionally, binds DNA with high affinity but does not bind to TATA boxes. Synergises with GMNN and TBP in activation of TATA box-containing promoters and with GMNN and TBPL1 in activation of the NF1 TATA-less promoter. May play a role in cytoplasm movement and removal during spermiogenesis. The sequence is that of Spermatogenesis-associated protein 24 (Spata24) from Mus musculus (Mouse).